Reading from the N-terminus, the 244-residue chain is 5-oxoprolinase subunit A (244 aa).

The protein belongs to the LamB/PxpA family. As to quaternary structure, forms a complex composed of PxpA, PxpB and PxpC.

The enzyme catalyses 5-oxo-L-proline + ATP + 2 H2O = L-glutamate + ADP + phosphate + H(+). Functionally, catalyzes the cleavage of 5-oxoproline to form L-glutamate coupled to the hydrolysis of ATP to ADP and inorganic phosphate. This Escherichia coli O139:H28 (strain E24377A / ETEC) protein is 5-oxoprolinase subunit A.